Reading from the N-terminus, the 219-residue chain is MSEKAVVVYSGGMDSFTVLNTAIQNGLDVYALSFNYGQKHSKELEVAAHVCRKLGISHKVVDITAINSLMANSSLTGDAEIPEGHYEDDNMKSTVVPNRNMVLLSMAIAYAVSLEAGKVYYGAHSGDHHIYPDCRPEFVEAMNAVSKIANYQSVEIVTPFLHSSKGEILKAGLDMNLNYANTWTCYNGREKSCGKCGACYERLEAFAEQGKTDPLEYEA.

Residue 9 to 19 (YSGGMDSFTVL) participates in ATP binding. 4 residues coordinate Zn(2+): C185, C193, C196, and C199.

The protein belongs to the QueC family. It depends on Zn(2+) as a cofactor.

It carries out the reaction 7-carboxy-7-deazaguanine + NH4(+) + ATP = 7-cyano-7-deazaguanine + ADP + phosphate + H2O + H(+). The protein operates within purine metabolism; 7-cyano-7-deazaguanine biosynthesis. Its function is as follows. Catalyzes the ATP-dependent conversion of 7-carboxy-7-deazaguanine (CDG) to 7-cyano-7-deazaguanine (preQ(0)). The protein is 7-cyano-7-deazaguanine synthase of Marinomonas sp. (strain MWYL1).